Here is a 232-residue protein sequence, read N- to C-terminus: 7-cyano-7-deazaguanine synthase 1 (232 aa).

7–17 (CSGGLDSVSLA) is a binding site for ATP. Zn(2+)-binding residues include Cys-185, Cys-193, Cys-196, and Cys-199.

It belongs to the QueC family. Zn(2+) serves as cofactor.

The catalysed reaction is 7-carboxy-7-deazaguanine + NH4(+) + ATP = 7-cyano-7-deazaguanine + ADP + phosphate + H2O + H(+). Its pathway is purine metabolism; 7-cyano-7-deazaguanine biosynthesis. In terms of biological role, catalyzes the ATP-dependent conversion of 7-carboxy-7-deazaguanine (CDG) to 7-cyano-7-deazaguanine (preQ(0)). In Mesorhizobium japonicum (strain LMG 29417 / CECT 9101 / MAFF 303099) (Mesorhizobium loti (strain MAFF 303099)), this protein is 7-cyano-7-deazaguanine synthase 1.